The sequence spans 730 residues: Jacalin-related lectin 5 (730 aa).

The Jacalin-type lectin 1 domain maps to 1–126; it reads MSWDDGKHTK…LNSIDAHFAP (126 aa). The interval 121–450 is disordered; sequence DAHFAPAPPP…GNQWDDGTDH (330 aa). Composition is skewed to low complexity over residues 138-153, 168-179, 196-207, and 248-261; these read GASG…GSAG, AGGSKPSSGSAG, and TEKN…SSGS. Positions 275-307 are enriched in polar residues; the sequence is ETVSNIGDTESNAGGSKSNDGANNGASGIESNA. Residues 314–323 are compositionally biased toward gly residues; sequence FGAGGTGGIG. The span at 343-358 shows a compositional bias: low complexity; it reads DGASGIGSNDGSTGTN. Polar residues-rich tracts occupy residues 366 to 375 and 388 to 416; these read DSNIEGTENN and IGNS…TGGK. Over residues 417-429 the composition is skewed to low complexity; sequence ESNTGSESNTNSS. Jacalin-type lectin domains follow at residues 430–572 and 584–727; these read PQKL…YFVP and PNKV…YFIP.

Belongs to the jacalin lectin family.

The protein is Jacalin-related lectin 5 (JAL5) of Arabidopsis thaliana (Mouse-ear cress).